A 439-amino-acid chain; its full sequence is Divalent metal cation transporter MntH (439 aa).

11 helical membrane-spanning segments follow: residues 32–52 (GASMLLPFAGPAVVVSVAYMD), 67–87 (GYALLWVVLLANVVAMLFQSL), 121–141 (IAAMATDLAAFLGGAIGLSLL), 144–164 (MPLLGGMVVTAIVTYGLLLLE), 173–193 (LAIGALVGIIGLSYLAELFIT), 214–234 (ALLIAVGIVGATVMPHALFLH), 261–281 (VVVALAIAGLINMAMVIMAAG), 301–321 (APLLGIGAAGVFLLSLIASGI), 350–370 (AVTMAPSFAVVALGVNVTQAL), 371–391 (VLSQVVLSLALPLPMAALLWF), and 406–426 (FIAVIATLAACAVLAFNAVLI).

It belongs to the NRAMP family.

The protein resides in the cell inner membrane. Functionally, h(+)-stimulated, divalent metal cation uptake system. This chain is Divalent metal cation transporter MntH, found in Verminephrobacter eiseniae (strain EF01-2).